Consider the following 114-residue polypeptide: Hydrogenase maturation factor HypA (114 aa).

Residue histidine 2 coordinates Ni(2+). Zn(2+) contacts are provided by cysteine 73, cysteine 76, cysteine 90, and cysteine 93.

Belongs to the HypA/HybF family.

Its function is as follows. Involved in the maturation of [NiFe] hydrogenases. Required for nickel insertion into the metal center of the hydrogenase. The sequence is that of Hydrogenase maturation factor HypA from Klebsiella pneumoniae (strain 342).